The primary structure comprises 285 residues: Seipin (285 aa).

At M1–S16 the chain is on the cytoplasmic side. The helical transmembrane segment at Y17–Y37 threads the bilayer. The Lumenal segment spans residues H38–R244. A helical membrane pass occupies residues F245–I265. Residues T266 to S285 lie on the Cytoplasmic side of the membrane.

The protein belongs to the seipin family.

Its subcellular location is the endoplasmic reticulum membrane. Involved in lipid metabolism and lipid droplet (LD) morphology, number, and size. Facilitates initiation of LD formation, and ensures that vectorial budding of LDs from the ER is directed towards the cytoplasm. The sequence is that of Seipin from Saccharomyces cerevisiae (strain ATCC 204508 / S288c) (Baker's yeast).